We begin with the raw amino-acid sequence, 89 residues long: UPF0223 protein BCE_4008 (89 aa).

Belongs to the UPF0223 family.

The sequence is that of UPF0223 protein BCE_4008 from Bacillus cereus (strain ATCC 10987 / NRS 248).